The following is a 370-amino-acid chain: Alpha-(1,3)-fucosyltransferase 7 (370 aa).

The Cytoplasmic portion of the chain corresponds to 1-36 (MVQGCLCWRGCCDLKTSFPWVTNSRRLWMNCIGCNP). A helical; Signal-anchor for type II membrane protein transmembrane segment spans residues 37 to 59 (VWRLRAWGCLAGGTTLMVIWLFW). Residues 60 to 370 (LLRSVPGGAP…YEDLESWFQA (311 aa)) lie on the Lumenal side of the membrane. A glycan (N-linked (GlcNAc...) asparagine) is linked at N86. A disulfide bridge links C96 with C104. A glycan (N-linked (GlcNAc...) asparagine) is linked at N109. C239 and C242 are oxidised to a cystine. Residue N319 is glycosylated (N-linked (GlcNAc...) asparagine). A disulfide bridge links C346 with C349.

This sequence belongs to the glycosyltransferase 10 family. Post-translationally, N-glycosylated. Expressed in lymph node and kidney.

The protein resides in the golgi apparatus. It localises to the golgi stack membrane. The enzyme catalyses an N-acetyl-alpha-neuraminyl-(2-&gt;3)-beta-D-galactosyl-(1-&gt;4)-N-acetyl-beta-D-glucosaminyl derivative + GDP-beta-L-fucose = an alpha-Neu5Ac-(2-&gt;3)-beta-D-Gal-(1-&gt;4)-[alpha-L-Fuc-(1-&gt;3)]-beta-D-GlcNAc derivative + GDP + H(+). It catalyses the reaction a neolactoside IV(3)-alpha-NeuAc-nLc4Cer + GDP-beta-L-fucose = a neolactoside IV(3)-alpha-NeuNAc,III(3)-alpha-Fuc-nLc4Cer + GDP + H(+). It carries out the reaction a neolactoside VI(3)-alpha-NeuNAc-nLc6Cer + GDP-beta-L-fucose = a neolactoside VI(3)-alpha-NeuAc,V(3)-alphaFuc-nLc6Cer + GDP + H(+). The catalysed reaction is an alpha-Neu5Ac-(2-&gt;3)-beta-D-Gal-(1-&gt;4)-beta-D-GlcNAc-(1-&gt;3)-beta-D-Gal-(1-&gt;4)-[alpha-L-Fuc-(1-&gt;3)]-beta-D-GlcNAc derivative + GDP-beta-L-fucose = an alpha-Neu5Ac-(2-&gt;3)-beta-D-Gal-(1-&gt;4)-[alpha-L-Fuc-(1-&gt;3)]-beta-D-GlcNAc-(1-&gt;3)-beta-D-Gal-(1-&gt;4)-[alpha-L-Fuc-(1-&gt;3)]-beta-D-GlcNAc derivative + GDP + H(+). The enzyme catalyses an alpha-Neu5Ac-(2-&gt;3)-beta-D-Gal-(1-&gt;4)-beta-D-GlcNAc6S derivative + GDP-beta-L-fucose = an alpha-Neu5Ac-(2-&gt;3)-beta-D-Gal-(1-&gt;4)-[alpha-L-Fuc-(1-&gt;3)]-beta-D-GlcNAc6S derivative + GDP + H(+). It catalyses the reaction alpha-Neu5Ac-(2-&gt;3)-beta-D-Gal-(1-&gt;4)-beta-D-GlcNAc-(1-&gt;3)-beta-D-Gal-(1-&gt;4)-D-Glc + GDP-beta-L-fucose = alpha-Neu5Ac-(2-&gt;3)-beta-D-Gal-(1-&gt;4)-[alpha-L-Fuc-(1-&gt;3)]-beta-D-GlcNAc-(1-&gt;3)-beta-D-Gal-(1-&gt;4)-D-Glc + GDP + H(+). It carries out the reaction alpha-Neu5Ac-(2-&gt;3)-beta-D-Gal-(1-&gt;4)-beta-D-GlcNAc-(1-&gt;3)-beta-D-Gal-(1-&gt;4)-[alpha-L-Fuc-(1-&gt;3)]-beta-D-GlcNAc-(1-&gt;3)-beta-D-Gal-(1-&gt;4)-beta-D-GlcNAc + GDP-beta-L-fucose = alpha-Neu5Ac-(2-&gt;3)-beta-D-Gal-(1-&gt;4)-[alpha-L-Fuc-(1-&gt;3)]-beta-D-GlcNAc-(1-&gt;3)-beta-D-Gal-(1-&gt;4)-[alpha-L-Fuc-(1-&gt;3)]-beta-D-GlcNAc-(1-&gt;3)-beta-D-Gal-(1-&gt;4)-beta-D-GlcNAc + GDP + H(+). The catalysed reaction is alpha-Neu5Ac-(2-&gt;3)-beta-D-Gal-(1-&gt;4)-beta-D-GlcNAc-(1-&gt;3)-beta-D-Gal-(1-&gt;4)-beta-D-GlcNAc-(1-&gt;3)-beta-D-Gal-(1-&gt;4)-beta-D-GlcNAc + GDP-beta-L-fucose = alpha-Neu5Ac-(2-&gt;3)-beta-D-Gal-(1-&gt;4)-[alpha-L-Fuc-(1-&gt;3)]-beta-D-GlcNAc-(1-&gt;3)-beta-D-Gal-(1-&gt;4)-beta-D-GlcNAc-(1-&gt;3)-beta-D-Gal-(1-&gt;4)-beta-D-GlcNAc + GDP + H(+). It participates in protein modification; protein glycosylation. With respect to regulation, inhibited by NaCl. Inhibited by GDP in a concentration dependent manner, with an IC(50) value of 93 uM. Also inhibited by GMP and GTP. Inhibited by N-ethylmaleimide. Activated by poly(ethylene glycol) by enhancing the thermal stability of FUT7. Activated by Mn2+, Ca2+, and Mg2+. Both panosialin A and B inhibit activity with IC(50) values of 4.8 and 5.3 ug/ml, respectively. Inhibited by gallic acid (GA) and (-)-epigallocatechin gallate (EGCG) in a time-dependent and irreversible manner with IC(50) values of 60 and 700 nM, respectively. Functionally, catalyzes the transfer of L-fucose, from a guanosine diphosphate-beta-L-fucose, to the N-acetyl glucosamine (GlcNAc) of a distal alpha2,3 sialylated lactosamine unit of a glycoprotein or a glycolipid-linked sialopolylactosamines chain through an alpha-1,3 glycosidic linkage and participates in the final fucosylation step in the biosynthesis of the sialyl Lewis X (sLe(x)), a carbohydrate involved in cell and matrix adhesion during leukocyte trafficking and fertilization. In vitro, also synthesizes sialyl-dimeric-Lex structures, from VIM-2 structures and both di-fucosylated and trifucosylated structures from mono-fucosylated precursors. However does not catalyze alpha 1-3 fucosylation when an internal alpha 1-3 fucosylation is present in polylactosamine chain and the fucosylation rate of the internal GlcNAc residues is reduced once fucose has been added to the distal GlcNAc. Also catalyzes the transfer of a fucose from GDP-beta-fucose to the 6-sulfated a(2,3)sialylated substrate to produce 6-sulfo sLex mediating significant L-selectin-dependent cell adhesion. Through sialyl-Lewis(x) biosynthesis, can control SELE- and SELP-mediated cell adhesion with leukocytes and allows leukocytes tethering and rolling along the endothelial tissue thereby enabling the leukocytes to accumulate at a site of inflammation. May enhance embryo implantation through sialyl Lewis X (sLeX)-mediated adhesion of embryo cells to endometrium. May affect insulin signaling by up-regulating the phosphorylation and expression of some signaling molecules involved in the insulin-signaling pathway through SLe(x) which is present on the glycans of the INSRR alpha subunit. The polypeptide is Alpha-(1,3)-fucosyltransferase 7 (Rattus norvegicus (Rat)).